Here is a 127-residue protein sequence, read N- to C-terminus: Glycine cleavage system H protein (127 aa).

Residues 22-104 form the Lipoyl-binding domain; the sequence is KARIGITHFA…YEKAWMIVVE (83 aa). The residue at position 63 (K63) is an N6-lipoyllysine.

This sequence belongs to the GcvH family. In terms of assembly, the glycine cleavage system is composed of four proteins: P, T, L and H. Requires (R)-lipoate as cofactor.

Functionally, the glycine cleavage system catalyzes the degradation of glycine. The H protein shuttles the methylamine group of glycine from the P protein to the T protein. In terms of biological role, is also involved in protein lipoylation via its role as an octanoyl/lipoyl carrier protein intermediate. This chain is Glycine cleavage system H protein, found in Bacillus velezensis (strain DSM 23117 / BGSC 10A6 / LMG 26770 / FZB42) (Bacillus amyloliquefaciens subsp. plantarum).